Consider the following 406-residue polypeptide: Succinylornithine transaminase/acetylornithine aminotransferase (406 aa).

Pyridoxal 5'-phosphate is bound by residues 108-109 (GA) and Phe-141. Arg-144 is a binding site for N(2)-acetyl-L-ornithine. A pyridoxal 5'-phosphate-binding site is contributed by 226–229 (DEVQ). At Lys-255 the chain carries N6-(pyridoxal phosphate)lysine. Thr-283 contacts N(2)-acetyl-L-ornithine. Thr-284 serves as a coordination point for pyridoxal 5'-phosphate.

The protein belongs to the class-III pyridoxal-phosphate-dependent aminotransferase family. ArgD subfamily. As to quaternary structure, homodimer. Pyridoxal 5'-phosphate serves as cofactor.

Its subcellular location is the cytoplasm. It catalyses the reaction N(2)-succinyl-L-ornithine + 2-oxoglutarate = N-succinyl-L-glutamate 5-semialdehyde + L-glutamate. The enzyme catalyses N(2)-acetyl-L-ornithine + 2-oxoglutarate = N-acetyl-L-glutamate 5-semialdehyde + L-glutamate. The protein operates within amino-acid biosynthesis; L-arginine biosynthesis; N(2)-acetyl-L-ornithine from L-glutamate: step 4/4. It participates in amino-acid degradation; L-arginine degradation via AST pathway; L-glutamate and succinate from L-arginine: step 3/5. Transaminates both N(2)-acetylornithine and N(2)-succinylornithine. This is Succinylornithine transaminase/acetylornithine aminotransferase (aruC) from Pseudomonas aeruginosa (strain ATCC 15692 / DSM 22644 / CIP 104116 / JCM 14847 / LMG 12228 / 1C / PRS 101 / PAO1).